A 469-amino-acid chain; its full sequence is Aspartyl/glutamyl-tRNA(Asn/Gln) amidotransferase subunit B (469 aa).

The protein belongs to the GatB/GatE family. GatB subfamily. Heterotrimer of A, B and C subunits.

The catalysed reaction is L-glutamyl-tRNA(Gln) + L-glutamine + ATP + H2O = L-glutaminyl-tRNA(Gln) + L-glutamate + ADP + phosphate + H(+). It catalyses the reaction L-aspartyl-tRNA(Asn) + L-glutamine + ATP + H2O = L-asparaginyl-tRNA(Asn) + L-glutamate + ADP + phosphate + 2 H(+). Functionally, allows the formation of correctly charged Asn-tRNA(Asn) or Gln-tRNA(Gln) through the transamidation of misacylated Asp-tRNA(Asn) or Glu-tRNA(Gln) in organisms which lack either or both of asparaginyl-tRNA or glutaminyl-tRNA synthetases. The reaction takes place in the presence of glutamine and ATP through an activated phospho-Asp-tRNA(Asn) or phospho-Glu-tRNA(Gln). In Methanococcus maripaludis (strain C7 / ATCC BAA-1331), this protein is Aspartyl/glutamyl-tRNA(Asn/Gln) amidotransferase subunit B.